Reading from the N-terminus, the 1758-residue chain is Y' element ATP-dependent helicase YIL177C (1758 aa).

The Helicase ATP-binding domain maps to 668 to 845 (EIYMADTPSV…LQRIGLTGLA (178 aa)). 681 to 688 (APPGYGKT) contacts ATP. Residues 900–1051 (ALKLLLALFE…EFYGLESKKG (152 aa)) form the Helicase C-terminal domain. The span at 1142-1360 (NVRTNATTNA…ATTTESTNAS (219 aa)) shows a compositional bias: low complexity. A disordered region spans residues 1142-1384 (NVRTNATTNA…RFHPVTDINK (243 aa)). Residues 1361-1384 (AKEDANKDGNAEDNRFHPVTDINK) are compositionally biased toward basic and acidic residues.

It belongs to the helicase family. Yeast subtelomeric Y' repeat subfamily.

Catalyzes DNA unwinding and is involved in telomerase-independent telomere maintenance. This is Y' element ATP-dependent helicase YIL177C from Saccharomyces cerevisiae (strain ATCC 204508 / S288c) (Baker's yeast).